The following is a 180-amino-acid chain: Large ribosomal subunit protein uL6 (180 aa).

This sequence belongs to the universal ribosomal protein uL6 family. Part of the 50S ribosomal subunit.

This protein binds to the 23S rRNA, and is important in its secondary structure. It is located near the subunit interface in the base of the L7/L12 stalk, and near the tRNA binding site of the peptidyltransferase center. In Thermoanaerobacter sp. (strain X514), this protein is Large ribosomal subunit protein uL6.